A 270-amino-acid polypeptide reads, in one-letter code: Interleukin-1 alpha (270 aa).

Residues 1–112 (MAKVPDLFED…DTEEEIIKPR (112 aa)) constitute a propeptide that is removed on maturation. Lys-82 is modified (N6-acetyllysine). Residues 82-86 (KKRRL) form a nuclear localization signal (NLS) region. Residue Ser-87 is modified to Phosphoserine. N-linked (GlcNAc...) asparagine glycosylation is found at Asn-102 and Asn-141.

This sequence belongs to the IL-1 family. Monomer. Interacts with TMED10; the interaction mediates the translocation from the cytoplasm into the ERGIC (endoplasmic reticulum-Golgi intermediate compartment) and thereby secretion. Interacts with IL1R1. Interacts with S100A13; this interaction is the first step in the export of IL1A, followed by direct translocation of this complex across the plasma membrane. Post-translationally, acetylated within its nuclear localization sequence, which impacts subcellular localization. In terms of processing, proteolytic processed by CAPN1 in a calcium-dependent manner. Cleavage from 31 kDa precursor to 18 kDa biologically active molecules. Phosphorylated. Phosphorylation greatly enhances susceptibility to digestion and promotes the conversion of pre-IL1A alpha to the biologically active IL1A.

The protein localises to the nucleus. Its subcellular location is the cytoplasm. It is found in the secreted. Functionally, cytokine constitutively present intracellularly in nearly all resting non-hematopoietic cells that plays an important role in inflammation and bridges the innate and adaptive immune systems. After binding to its receptor IL1R1 together with its accessory protein IL1RAP, forms the high affinity interleukin-1 receptor complex. Signaling involves the recruitment of adapter molecules such as MYD88, IRAK1 or IRAK4. In turn, mediates the activation of NF-kappa-B and the three MAPK pathways p38, p42/p44 and JNK pathways. Within the cell, acts as an alarmin and cell death results in its liberation in the extracellular space after disruption of the cell membrane to induce inflammation and alert the host to injury or damage. In addition to its role as a danger signal, which occurs when the cytokine is passively released by cell necrosis, directly senses DNA damage and acts as signal for genotoxic stress without loss of cell integrity. The sequence is that of Interleukin-1 alpha (IL1A) from Sus scrofa (Pig).